We begin with the raw amino-acid sequence, 929 residues long: Band 4.1-like protein 3 (929 aa).

An N-acetylmethionine modification is found at Met-1. The disordered stretch occupies residues 1 to 72; the sequence is MTTESGSDSE…STPVKREIGD (72 aa). Thr-2 is subject to N-acetylthreonine; in Band 4.1-like protein 3, N-terminally processed. Positions 20 to 33 are enriched in low complexity; that stretch reads QEAAGPQGQAGAQP. Ser-96 bears the Phosphoserine mark. The FERM domain occupies 118–399; sequence MQCKVTLLDG…EHHTFFRLLL (282 aa). The hydrophilic stretch occupies residues 402–528; the sequence is APPKKFLTLG…PVTALRHEGK (127 aa). A phosphoserine mark is found at Ser-428, Ser-451, and Ser-486. Residues 490–554 are disordered; the sequence is LITTVTPEKK…TESDQEEDAE (65 aa). Thr-495 is subject to Phosphothreonine. The span at 496–516 shows a compositional bias: basic and acidic residues; sequence PEKKAEEERVEEEDRRKKAEE. The residue at position 518 (Thr-518) is a Phosphothreonine. Over residues 523-536 the composition is skewed to basic and acidic residues; sequence LRHEGKTDSERTDT. His-525 and Ser-543 each carry phosphoserine. Position 545 is a phosphothreonine (Thr-545). Phosphoserine is present on Ser-547. Positions 559-602 are spectrin--actin-binding; the sequence is DLDKTQDELMKHQTNISELKRTFLETSTETALTNEWEKRLSTSP. Disordered regions lie at residues 608-630, 665-689, and 705-807; these read RQED…SGEK, LETK…STEK, and VHAS…SPGG. A Phosphothreonine modification is found at Thr-725. The span at 726 to 737 shows a compositional bias: basic and acidic residues; sequence PTDRRHTGKGKE. Residues 777-929 are C-terminal (CTD); that stretch reads RTSEGLEQKS…TEITPEDGED (153 aa). Over residues 789–802 the composition is skewed to low complexity; the sequence is ESSTVRVESTSVGS. Residues Ser-802 and Ser-804 each carry the phosphoserine modification. Phosphothreonine is present on Thr-923.

As to quaternary structure, interacts (via FERM domain) with CADM1. Interacts (via FERM domain) with PRMT3; the interaction is direct and inhibits the protein-arginine N-methyltransferase activity of PRMT3. Interacts with PRMT5. Interacts with PRMT6. In terms of assembly, has the complete spectrin--actin-binding (SAB) domain and fully interacts with spectrin and actin. As to expression, detected in brain (at protein level). Highest expression in brain, lower in testis, adrenal gland, heart and kidney. Also present in muscle and epithelial cells. Isoform 1 is expressed in brain, isoform 2 is expressed in heart and isoform 3 is mostly expressed in kidney but also in heart and brain. Isoform 6 seems to be most abundant in kidney while isoform 4 and isoform 5 are predominantly expressed in heart and brain.

The protein resides in the cytoplasm. The protein localises to the cytoskeleton. It is found in the cell membrane. Its subcellular location is the cell junction. Tumor suppressor that inhibits cell proliferation and promotes apoptosis. Modulates the activity of protein arginine N-methyltransferases, including PRMT3 and PRMT5. The sequence is that of Band 4.1-like protein 3 from Mus musculus (Mouse).